The sequence spans 248 residues: PF03932 family protein CutC (248 aa).

It belongs to the CutC family. As to quaternary structure, homodimer.

It is found in the cytoplasm. The sequence is that of PF03932 family protein CutC from Escherichia coli (strain SMS-3-5 / SECEC).